The chain runs to 337 residues: Oxidoreductase andH (337 aa).

This sequence belongs to the NmrA-type oxidoreductase family.

It functions in the pathway secondary metabolite biosynthesis; terpenoid biosynthesis. Its function is as follows. Oxidoreductase; part of the gene cluster that mediates the biosynthesis of anditomin, a fungal meroterpenoid. The first step of the pathway is the synthesis of 3,5-dimethylorsellinic acid (DMOA) by the polyketide synthase andM. DMOA is then converted to the phthalide compound 5,7-dihydroxy-4,6-dimethylphthalide (DHDMP) by the cytochrome P450 monooxygenase andK, which is further prenylated by the prenyltransferase andD to yield farnesyl-DHDMP. Further epoxidation by the FAD-dependent monooxygenase andE leads to epoxyfarnesyl-DHDMP. The next step involves the terpene cyclase andB that converts epoxyfarnesyl-DHDMP into preandiloid A through opening of the epoxide ring followed by the cyclization of the farnesyl moiety. Preandiloid A is in turn oxidized at the C-3 hydroxyl group to yield preandiloid B by the dehydrogenase andC. The dioxygenase andA is solely responsible for the dehydrogenation of preandiloid B leading to the enone preandiloid C, as well as for the intriguing structural rearrangement to generate the bicyclo[2.2.2]octane core, transforming preandiloid C into andiconin. FAD-binding monooxygenase andJ then produces andilesin D which is reduced by dehydrogenase andI to yield andilesin A. Action of acetyltransferase andG followed by a spontaneous acetate elimination leads then to andilesin B, which is in turn substrate of the short chain dehydrogenase andH to yield andilesin C. Finally, the dioxygenase andF catalyzes the transformation of andilesin C to anditomin. The protein is Oxidoreductase andH of Emericella variicolor (Aspergillus stellatus).